The sequence spans 162 residues: uncharacterized protein (162 aa).

One can recognise an HTH asnC-type domain in the interval 6-78; that stretch reads LDDLDRNILR…ALIVLEVGKP (73 aa). Positions 25-44 form a DNA-binding region, H-T-H motif; it reads ISELSEQLKKPESTIHFRIK.

This is an uncharacterized protein from Pyrococcus furiosus (strain ATCC 43587 / DSM 3638 / JCM 8422 / Vc1).